The chain runs to 75 residues: Alpha-amylase inhibitor Paim-2 (75 aa).

Intrachain disulfides connect Cys10/Cys26 and Cys44/Cys72.

Inhibits mammalian alpha-amylases specifically but has no action on plant and microbial alpha-amylases. The sequence is that of Alpha-amylase inhibitor Paim-2 from Streptomyces olivaceoviridis (Streptomyces corchorusii).